We begin with the raw amino-acid sequence, 392 residues long: Formate-dependent phosphoribosylglycinamide formyltransferase (392 aa).

Residues 22 to 23 (EL) and Glu-82 each bind N(1)-(5-phospho-beta-D-ribosyl)glycinamide. Residues Arg-114, Lys-155, 160–165 (SSGKGQ), 195–198 (EGVV), and Glu-203 each bind ATP. The ATP-grasp domain occupies 119–308 (RLAAEELGLP…EFALHVRAFL (190 aa)). Positions 267 and 279 each coordinate Mg(2+). Residues Asp-286, Lys-355, and 362 to 363 (RR) contribute to the N(1)-(5-phospho-beta-D-ribosyl)glycinamide site.

It belongs to the PurK/PurT family. As to quaternary structure, homodimer.

The enzyme catalyses N(1)-(5-phospho-beta-D-ribosyl)glycinamide + formate + ATP = N(2)-formyl-N(1)-(5-phospho-beta-D-ribosyl)glycinamide + ADP + phosphate + H(+). The protein operates within purine metabolism; IMP biosynthesis via de novo pathway; N(2)-formyl-N(1)-(5-phospho-D-ribosyl)glycinamide from N(1)-(5-phospho-D-ribosyl)glycinamide (formate route): step 1/1. In terms of biological role, involved in the de novo purine biosynthesis. Catalyzes the transfer of formate to 5-phospho-ribosyl-glycinamide (GAR), producing 5-phospho-ribosyl-N-formylglycinamide (FGAR). Formate is provided by PurU via hydrolysis of 10-formyl-tetrahydrofolate. The protein is Formate-dependent phosphoribosylglycinamide formyltransferase of Salmonella typhimurium (strain LT2 / SGSC1412 / ATCC 700720).